We begin with the raw amino-acid sequence, 418 residues long: Bifunctional protein GlmU (418 aa).

The interval 1-236 (MAAVIVLAAG…VWQTEGVNDR (236 aa)) is pyrophosphorylase. Residues 7–10 (LAAG), Lys-21, Gln-74, 79–80 (GT), 102–104 (YGD), Gly-141, Glu-155, Asn-170, and Asn-234 contribute to the UDP-N-acetyl-alpha-D-glucosamine site. Asp-104 serves as a coordination point for Mg(2+). Asn-234 provides a ligand contact to Mg(2+). The tract at residues 237 to 257 (VQLARMNAEVNRRIVTGWMRA) is linker. The tract at residues 258–418 (GVTIIDPTST…DDTLNPEADQ (161 aa)) is N-acetyltransferase. UDP-N-acetyl-alpha-D-glucosamine is bound by residues Arg-339 and Lys-357. His-369 serves as the catalytic Proton acceptor. Tyr-372 lines the UDP-N-acetyl-alpha-D-glucosamine pocket. Ala-386 contributes to the acetyl-CoA binding site.

In the N-terminal section; belongs to the N-acetylglucosamine-1-phosphate uridyltransferase family. It in the C-terminal section; belongs to the transferase hexapeptide repeat family. As to quaternary structure, homotrimer. Requires Mg(2+) as cofactor.

The protein localises to the cytoplasm. The catalysed reaction is alpha-D-glucosamine 1-phosphate + acetyl-CoA = N-acetyl-alpha-D-glucosamine 1-phosphate + CoA + H(+). It catalyses the reaction N-acetyl-alpha-D-glucosamine 1-phosphate + UTP + H(+) = UDP-N-acetyl-alpha-D-glucosamine + diphosphate. The protein operates within nucleotide-sugar biosynthesis; UDP-N-acetyl-alpha-D-glucosamine biosynthesis; N-acetyl-alpha-D-glucosamine 1-phosphate from alpha-D-glucosamine 6-phosphate (route II): step 2/2. Its pathway is nucleotide-sugar biosynthesis; UDP-N-acetyl-alpha-D-glucosamine biosynthesis; UDP-N-acetyl-alpha-D-glucosamine from N-acetyl-alpha-D-glucosamine 1-phosphate: step 1/1. It functions in the pathway bacterial outer membrane biogenesis; LPS lipid A biosynthesis. Catalyzes the last two sequential reactions in the de novo biosynthetic pathway for UDP-N-acetylglucosamine (UDP-GlcNAc). The C-terminal domain catalyzes the transfer of acetyl group from acetyl coenzyme A to glucosamine-1-phosphate (GlcN-1-P) to produce N-acetylglucosamine-1-phosphate (GlcNAc-1-P), which is converted into UDP-GlcNAc by the transfer of uridine 5-monophosphate (from uridine 5-triphosphate), a reaction catalyzed by the N-terminal domain. The chain is Bifunctional protein GlmU from Cutibacterium acnes (strain DSM 16379 / KPA171202) (Propionibacterium acnes).